The chain runs to 477 residues: E3 ubiquitin-protein ligase TRIM17 (477 aa).

Residues 16 to 66 (CSICLDYFTDPVMTACGHNFCRECIQMSWEKGKGKKGKKKQKGSFPCPECR) form an RING-type zinc finger. The B box-type zinc-finger motif lies at 94 to 135 (HKRDLCQIHQEPLKLFCQDDQTPICVVCREAQEHRMHRVLPL). Cys99, His102, Cys121, and His127 together coordinate Zn(2+). A coiled-coil region spans residues 135-225 (LDEAAREYKL…GKLQDSKASL (91 aa)). One can recognise a B30.2/SPRY domain in the interval 276–475 (AIKTVCRVPG…MVISTVTMWV (200 aa)).

It belongs to the TRIM/RBCC family. Interacts (via coiled coil) with TRIM44 (via coiled coil). Interacts with TRIM28; this interaction prevents TRIM28 activity on BCL2A1. Interacts with TRIM41; this interaction prevents TRIM41 activity on ZSCAN2. Interacts with BECN1. Interacts with NFATC3 and NFATC4; these interactions prevent NFATC3 and NFATC4 nuclear localization. In terms of processing, auto-ubiquitinated. Expressed almost exclusively in the testis.

The protein localises to the cytoplasm. The protein resides in the lysosome. It catalyses the reaction S-ubiquitinyl-[E2 ubiquitin-conjugating enzyme]-L-cysteine + [acceptor protein]-L-lysine = [E2 ubiquitin-conjugating enzyme]-L-cysteine + N(6)-ubiquitinyl-[acceptor protein]-L-lysine.. The protein operates within protein modification; protein ubiquitination. E3 ubiquitin ligase that plays important roles in the regulation of neuronal apoptosis, selective autophagy or cell proliferation. Stimulates the degradation of kinetochore ZW10 interacting protein ZWINT in a proteasome-dependent manner, leading to negative regulation of cell proliferation. Inhibits autophagic degradation of diverse known targets while contributing to autophagy of midbodies. Autophagy-inhibitory activity involves MCL1, which TRIM17 assembles into complexes with the key autophagy regulator BECN1. Controls neuronal apoptosis by mediating ubiquitination and degradation of MCL1 to initiate neuronal death. In addition, regulates NFAT transcription factors NFATC3 and NFATC4 activities by preventing their nuclear localization, thus inhibiting their transcriptional activities. Decreases TRIM41-mediated degradation of ZSCAN2 thereby stimulating alpha-synuclein/SNCA transcription in neuronal cells. Prevents the E3 ubiquitin-ligase activity of TRIM28 and its interaction with anti-apoptotic BCL2A1, blocking TRIM28 from ubiquitinating BCL2A1. The protein is E3 ubiquitin-protein ligase TRIM17 (Trim17) of Rattus norvegicus (Rat).